A 312-amino-acid chain; its full sequence is DNA-directed RNA polymerase subunit alpha (312 aa).

Residues 1-226 (MIEFKKPNIT…EHFKAFESAD (226 aa)) are alpha N-terminal domain (alpha-NTD). Residues 243–312 (KEKKLEMTIE…DLGLSLRQED (70 aa)) form an alpha C-terminal domain (alpha-CTD) region.

This sequence belongs to the RNA polymerase alpha chain family. Homodimer. The RNAP catalytic core consists of 2 alpha, 1 beta, 1 beta' and 1 omega subunit. When a sigma factor is associated with the core the holoenzyme is formed, which can initiate transcription.

It catalyses the reaction RNA(n) + a ribonucleoside 5'-triphosphate = RNA(n+1) + diphosphate. Functionally, DNA-dependent RNA polymerase catalyzes the transcription of DNA into RNA using the four ribonucleoside triphosphates as substrates. This chain is DNA-directed RNA polymerase subunit alpha, found in Lactobacillus delbrueckii subsp. bulgaricus (strain ATCC BAA-365 / Lb-18).